The chain runs to 264 residues: S-adenosylmethionine decarboxylase proenzyme (264 aa).

Ser112 acts as the Schiff-base intermediate with substrate; via pyruvic acid in catalysis. Ser112 carries the pyruvic acid (Ser); by autocatalysis modification. The Proton acceptor; for processing activity role is filled by His117. The Proton donor; for catalytic activity role is filled by Cys140.

The protein belongs to the prokaryotic AdoMetDC family. Type 2 subfamily. Heterooctamer of four alpha and four beta chains arranged as a tetramer of alpha/beta heterodimers. Pyruvate is required as a cofactor. In terms of processing, is synthesized initially as an inactive proenzyme. Formation of the active enzyme involves a self-maturation process in which the active site pyruvoyl group is generated from an internal serine residue via an autocatalytic post-translational modification. Two non-identical subunits are generated from the proenzyme in this reaction, and the pyruvate is formed at the N-terminus of the alpha chain, which is derived from the carboxyl end of the proenzyme. The post-translation cleavage follows an unusual pathway, termed non-hydrolytic serinolysis, in which the side chain hydroxyl group of the serine supplies its oxygen atom to form the C-terminus of the beta chain, while the remainder of the serine residue undergoes an oxidative deamination to produce ammonia and the pyruvoyl group blocking the N-terminus of the alpha chain.

It carries out the reaction S-adenosyl-L-methionine + H(+) = S-adenosyl 3-(methylsulfanyl)propylamine + CO2. Its pathway is amine and polyamine biosynthesis; S-adenosylmethioninamine biosynthesis; S-adenosylmethioninamine from S-adenosyl-L-methionine: step 1/1. Catalyzes the decarboxylation of S-adenosylmethionine to S-adenosylmethioninamine (dcAdoMet), the propylamine donor required for the synthesis of the polyamines spermine and spermidine from the diamine putrescine. The chain is S-adenosylmethionine decarboxylase proenzyme from Enterobacter sp. (strain 638).